The primary structure comprises 142 residues: Galactose-binding lectin l-1 (142 aa).

The Galectin domain maps to 3-134 (FVEVKNLIMK…DATVKNISVN (132 aa)). Residue 68–74 (WQEEQRD) participates in a beta-D-galactoside binding. Residue N130 is glycosylated (N-linked (GlcNAc...) asparagine).

In terms of assembly, homodimer. Post-translationally, the N-terminus is blocked. In terms of tissue distribution, skin; highest expression in that of individuals showing resistance to infectious disease.

It is found in the secreted. Involved in host defense at the body surface. Causes agglutination of the Gram-positive bacterium S.difficile. Possesses calcium-independent hemagglutinating activity. This Anguilla japonica (Japanese eel) protein is Galactose-binding lectin l-1.